Reading from the N-terminus, the 212-residue chain is Nuclear transcription factor Y subunit C-7 (212 aa).

A compositionally biased stretch (polar residues) spans 1–10 (MEENNGNNNH). Disordered stretches follow at residues 1 to 23 (MEENNGNNNHYLPQPSSSQLPPP) and 190 to 212 (EWPAVPGDGEEAAGEIGGSSGGN).

The protein belongs to the NFYC/HAP5 subunit family. In terms of assembly, heterotrimeric transcription factor composed of three components, NF-YA, NF-YB and NF-YC. NF-YB and NF-YC must interact and dimerize for NF-YA association and DNA binding. Expressed in flowers.

It localises to the nucleus. In terms of biological role, stimulates the transcription of various genes by recognizing and binding to a CCAAT motif in promoters. The polypeptide is Nuclear transcription factor Y subunit C-7 (NFYC7) (Arabidopsis thaliana (Mouse-ear cress)).